The sequence spans 960 residues: CWF19-like protein 2 (960 aa).

Disordered stretches follow at residues 1–222 (MAAY…AGVV), 261–552 (EFQK…ELIL), 624–648 (AWPV…AIET), and 712–731 (AQKE…AVQE). A coiled-coil region spans residues 13–101 (SIKSRKESKR…KKAKKEKKDE (89 aa)). Basic and acidic residues predominate over residues 16 to 52 (SRKESKREERERVIQKAKEKFEKEERRKAERKARGED). Residues 73-96 (KTKKAKKEKKAKKSKKEKKKKAKK) are compositionally biased toward basic residues. Over residues 108-117 (SSEDSEDEWV) the composition is skewed to acidic residues. Over residues 135-146 (EATPSSSSASNN) the composition is skewed to low complexity. The stretch at 163–279 (SVADRRAQKE…EDAAYGERRD (117 aa)) forms a coiled coil. Composition is skewed to basic and acidic residues over residues 165-181 (ADRR…ERQK), 261-372 (EFQK…DDLS), and 404-417 (KPVD…EAGF). The segment covering 507 to 518 (SAVQDSETPTLQ) has biased composition (polar residues). Residues 540–605 (SESEEEEEEE…IKDQSKRASK (66 aa)) adopt a coiled-coil conformation. Over residues 541–552 (ESEEEEEEELIL) the composition is skewed to acidic residues. Positions 713 to 731 (QKERAGRDEERQRNKAVQE) are enriched in basic and acidic residues.

The protein belongs to the CWF19 family.

In Danio rerio (Zebrafish), this protein is CWF19-like protein 2 (cwf19l2).